The following is a 177-amino-acid chain: ATP-dependent protease subunit HslV (177 aa).

Residue threonine 5 is part of the active site. The Na(+) site is built by glycine 161, cysteine 164, and threonine 167.

This sequence belongs to the peptidase T1B family. HslV subfamily. In terms of assembly, a double ring-shaped homohexamer of HslV is capped on each side by a ring-shaped HslU homohexamer. The assembly of the HslU/HslV complex is dependent on binding of ATP.

Its subcellular location is the cytoplasm. The enzyme catalyses ATP-dependent cleavage of peptide bonds with broad specificity.. Its activity is regulated as follows. Allosterically activated by HslU binding. Its function is as follows. Protease subunit of a proteasome-like degradation complex believed to be a general protein degrading machinery. This chain is ATP-dependent protease subunit HslV, found in Campylobacter concisus (strain 13826).